We begin with the raw amino-acid sequence, 336 residues long: DNA-directed RNA polymerase subunit alpha (336 aa).

Residues methionine 1–aspartate 232 form an alpha N-terminal domain (alpha-NTD) region. Residues phenylalanine 248–tyrosine 336 are alpha C-terminal domain (alpha-CTD).

Belongs to the RNA polymerase alpha chain family. Homodimer. The RNAP catalytic core consists of 2 alpha, 1 beta, 1 beta' and 1 omega subunit. When a sigma factor is associated with the core the holoenzyme is formed, which can initiate transcription.

The enzyme catalyses RNA(n) + a ribonucleoside 5'-triphosphate = RNA(n+1) + diphosphate. Functionally, DNA-dependent RNA polymerase catalyzes the transcription of DNA into RNA using the four ribonucleoside triphosphates as substrates. This is DNA-directed RNA polymerase subunit alpha from Rhizobium etli (strain CIAT 652).